We begin with the raw amino-acid sequence, 340 residues long: Immunoglobulin-binding protein 1 (340 aa).

One can recognise a UIM domain in the interval leucine 47–aspartate 61. Residues arginine 99 to glycine 203 are interaction with PPP2CA. Disordered stretches follow at residues aspartate 221–lysine 242 and leucine 281–glycine 340. Positions arginine 226 to serine 291 are interaction with MID1. Lysine 242 carries the N6-acetyllysine modification. Positions alanine 292–glutamine 301 are enriched in low complexity. The segment covering glutamate 302–glutamate 312 has biased composition (acidic residues). A compositionally biased stretch (basic and acidic residues) spans glutamate 313–proline 330.

This sequence belongs to the IGBP1/TAP42 family. Interacts with partially folded PPP2CA, but not with the fully active protein. Interacts with PPP2CB, and with PP4 and PP6. Interacts with MID1 and MID2. Interacts with ubiquitin. Post-translationally, phosphorylated. In terms of processing, monoubiquitination by MID1 triggers calpain-mediated cleavage and switches IGBP1 activity from protective to destructive.

It is found in the cytoplasm. Associated to surface IgM-receptor; may be involved in signal transduction. Involved in regulation of the catalytic activity of the phosphatases PP2A, PP4 and PP6 by protecting their partially folded catalytic subunits from degradative polyubiquitination until they associate with regulatory subunits. The protein is Immunoglobulin-binding protein 1 (Igbp1) of Rattus norvegicus (Rat).